The following is a 282-amino-acid chain: Glutamate racemase (282 aa).

Substrate contacts are provided by residues 13–14 (DS) and 45–46 (YG). The active-site Proton donor/acceptor is cysteine 76. 77–78 (NT) is a substrate binding site. The Proton donor/acceptor role is filled by cysteine 186. Residue 187–188 (TH) coordinates substrate.

Belongs to the aspartate/glutamate racemases family.

It carries out the reaction L-glutamate = D-glutamate. It participates in cell wall biogenesis; peptidoglycan biosynthesis. Functionally, provides the (R)-glutamate required for cell wall biosynthesis. The sequence is that of Glutamate racemase from Ralstonia pickettii (strain 12J).